The chain runs to 143 residues: Glycine cleavage system H protein 1 (143 aa).

A Lipoyl-binding domain is found at 26–107 (IYSVGMASIL…PYSSWIAKLK (82 aa)). Position 67 is an N6-lipoyllysine (Lys67).

Belongs to the GcvH family. As to quaternary structure, the glycine cleavage system is composed of four proteins: P, T, L and H. (R)-lipoate serves as cofactor.

In terms of biological role, the glycine cleavage system catalyzes the degradation of glycine. The H protein shuttles the methylamine group of glycine from the P protein to the T protein. The chain is Glycine cleavage system H protein 1 from Aquifex aeolicus (strain VF5).